A 288-amino-acid chain; its full sequence is Phenazine biosynthesis-like domain-containing protein (288 aa).

Residue Glu46 is part of the active site.

The protein belongs to the PhzF family. As to quaternary structure, interacts with UNRIP/MAWD.

The polypeptide is Phenazine biosynthesis-like domain-containing protein (PBLD) (Bos taurus (Bovine)).